Here is a 279-residue protein sequence, read N- to C-terminus: Vitamin B12-binding protein (279 aa).

A signal peptide spans 1–20 (MTFRFLCWLTGLLLCTAAYA). The 253-residue stretch at 24 to 276 (RVISLAPHAT…QLAELKLAPS (253 aa)) folds into the Fe/B12 periplasmic-binding domain. A disulfide bridge connects residues Cys-189 and Cys-265.

This sequence belongs to the BtuF family. The complex is composed of two ATP-binding proteins (BtuD), two transmembrane proteins (BtuC) and a solute-binding protein (BtuF).

It is found in the periplasm. Its function is as follows. Part of the ABC transporter complex BtuCDF involved in vitamin B12 import. Binds vitamin B12 and delivers it to the periplasmic surface of BtuC. This Pectobacterium atrosepticum (strain SCRI 1043 / ATCC BAA-672) (Erwinia carotovora subsp. atroseptica) protein is Vitamin B12-binding protein.